We begin with the raw amino-acid sequence, 1415 residues long: DNA-directed RNA polymerase subunit beta' (1415 aa).

Zn(2+) contacts are provided by Cys70, Cys72, Cys85, and Cys88. Mg(2+) is bound by residues Asp461, Asp463, and Asp465. Zn(2+) contacts are provided by Cys820, Cys894, Cys901, and Cys904. The tract at residues 1382–1415 is disordered; that stretch reads ERERAQAIADEEQSLFIEPPPVVQATTEGEGDNA.

It belongs to the RNA polymerase beta' chain family. As to quaternary structure, the RNAP catalytic core consists of 2 alpha, 1 beta, 1 beta' and 1 omega subunit. When a sigma factor is associated with the core the holoenzyme is formed, which can initiate transcription. It depends on Mg(2+) as a cofactor. Zn(2+) is required as a cofactor.

The enzyme catalyses RNA(n) + a ribonucleoside 5'-triphosphate = RNA(n+1) + diphosphate. DNA-dependent RNA polymerase catalyzes the transcription of DNA into RNA using the four ribonucleoside triphosphates as substrates. The protein is DNA-directed RNA polymerase subunit beta' of Cupriavidus pinatubonensis (strain JMP 134 / LMG 1197) (Cupriavidus necator (strain JMP 134)).